The chain runs to 348 residues: Cylicin-2 (348 aa).

Residues 25 to 347 (KKSWNQQHFA…DEKKDAKKKG (323 aa)) are 31 X 3 AA repeats of K-K-X. 2 disordered regions span residues 35–59 (LLFP…DNTV) and 101–348 (PTRT…KKGK). 4 stretches are compositionally biased toward basic and acidic residues: residues 103–159 (RTVE…DAKK), 166–217 (KDAE…EKDS), 238–267 (KADE…AKEI), and 276–342 (KPSS…EKKD). 3 consecutive repeat copies span residues 157 to 184 (AKKD…EKGG), 185 to 212 (AKKD…EKGG), and 213 to 240 (TEKD…VKAD). The segment at 157–240 (AKKDSKKGKK…AIELQAVKAD (84 aa)) is 3 X approximate tandem repeats.

As to expression, testis.

Its subcellular location is the cytoplasm. The protein resides in the cytoskeleton. It localises to the perinuclear theca. The protein localises to the calyx. In terms of biological role, plays a role in the establishment of normal sperm morphology during spermatogenesis. It is required for acrosome attachment to the nuclear envelope, and proper manchette elongation and disassembly. This Homo sapiens (Human) protein is Cylicin-2 (CYLC2).